The following is a 189-amino-acid chain: Nucleolar protein 16 (189 aa).

Basic residues predominate over residues 1-33; the sequence is MARDVKKRGKPAYTNRRNRQKYLKKKDNKKKLS. A disordered region spans residues 1-34; the sequence is MARDVKKRGKPAYTNRRNRQKYLKKKDNKKKLSK.

It belongs to the NOP16 family.

It is found in the nucleus. The protein resides in the nucleolus. This is Nucleolar protein 16 from Caenorhabditis elegans.